We begin with the raw amino-acid sequence, 305 residues long: NADH-cytochrome b5 reductase 1 (305 aa).

The helical transmembrane segment at 8–28 threads the bilayer; it reads VLLASLGVGLVTLLGLAVGSY. The 113-residue stretch at 44 to 156 folds into the FAD-binding FR-type domain; it reads NEKYLLRLLD…RGPSGLLTYT (113 aa). Residues 136 to 166 and 175 to 210 each bind FAD; these read DSLKVGDVVEFRGPSGLLTYTGKGHFNIQPN and VAKKLGMIAGGTGITPMLQLIRAILKVPEDPTQCFL.

Belongs to the flavoprotein pyridine nucleotide cytochrome reductase family. Requires FAD as cofactor. In terms of tissue distribution, widely expressed.

It is found in the membrane. It catalyses the reaction 2 Fe(III)-[cytochrome b5] + NADH = 2 Fe(II)-[cytochrome b5] + NAD(+) + H(+). In terms of biological role, NADH-cytochrome b5 reductases are involved in desaturation and elongation of fatty acids, cholesterol biosynthesis, drug metabolism, and, in erythrocyte, methemoglobin reduction. The sequence is that of NADH-cytochrome b5 reductase 1 (CYB5R1) from Homo sapiens (Human).